Here is a 48-residue protein sequence, read N- to C-terminus: Small, acid-soluble spore protein O (48 aa).

Residues Met1 to Ala23 form a disordered region.

It belongs to the SspO family.

It localises to the spore core. The chain is Small, acid-soluble spore protein O from Bacillus velezensis (strain DSM 23117 / BGSC 10A6 / LMG 26770 / FZB42) (Bacillus amyloliquefaciens subsp. plantarum).